The primary structure comprises 65 residues: Vespid chemotactic peptide 5h (65 aa).

An N-terminal signal peptide occupies residues 1–23 (MKYNIVFLFAIIASLACLQLTFA). AXPX repeat units follow at residues 23-26 (AAPA), 27-30 (ASPL), 31-34 (ANPG), 35-38 (ASPD), 39-42 (AAPN), 43-46 (ADPL), and 47-50 (ADPF). A propeptide spanning residues 24–49 (APAASPLANPGASPDAAPNADPLADP) is cleaved from the precursor. At leucine 62 the chain carries Leucine amide.

This sequence belongs to the MCD family. Crabrolin subfamily. In terms of tissue distribution, expressed by the venom gland.

It localises to the secreted. In terms of biological role, shows antimicrobial activity against the Gram-negative bacteria E.coli ATCC 25922 (MIC=30 ug/ml), the Gram-positive bacteria S.aureus ATCC 2592 (MIC=5 ug/ml) and the fungus C.albicans ATCC 2002 (MIC=25 ug/ml). Acts as a mast cell degranulating peptide. Its mast cell degranulation activity may be related to the activation of G-protein coupled receptors in mast cells as well as interaction with other proteins located in cell endosomal membranes in the mast cells. Induces the chemotaxis of neutrophils. The chain is Vespid chemotactic peptide 5h from Vespa magnifica (Hornet).